Reading from the N-terminus, the 564-residue chain is Cysteine--tRNA ligase CPS1, chloroplastic/mitochondrial (564 aa).

The N-terminal 43 residues, 1 to 43 (MAAAVVVRRAAGLIPLLSSRFGARMPLHRALSQIPPPRFCRLL), are a transit peptide targeting the chloroplast and mitochondrion. Cysteine 93 is a Zn(2+) binding site. The short motif at 95-105 (VTPYDDSHIGH) is the 'HIGH' region element. Zn(2+) contacts are provided by cysteine 273, histidine 298, and glutamate 302. Positions 330–334 (KMSKS) match the 'KMSKS' region motif. ATP is bound at residue lysine 333.

Belongs to the class-I aminoacyl-tRNA synthetase family. Requires Zn(2+) as cofactor.

It is found in the plastid. The protein resides in the chloroplast. It localises to the mitochondrion. It catalyses the reaction tRNA(Cys) + L-cysteine + ATP = L-cysteinyl-tRNA(Cys) + AMP + diphosphate. Functionally, nuclear genome-encoded factor required for normal assembly of chloroplast polysomes. The protein is Cysteine--tRNA ligase CPS1, chloroplastic/mitochondrial of Zea mays (Maize).